A 538-amino-acid polypeptide reads, in one-letter code: DALR anticodon-binding domain-containing protein 3 (538 aa).

In terms of assembly, part of a complex containing tRNA(Arg) and METTL2. Interacts with tRNA(Arg)(CCU) and tRNA(Arg)(UCU). Interacts with METTL2.

In terms of biological role, involved in tRNA methylation. Facilitates the recognition and targeting of tRNA(Arg)(CCU) and tRNA(Arg)(UCU) substrates for N(3)-methylcytidine modification by METTL2. The chain is DALR anticodon-binding domain-containing protein 3 (Dalrd3) from Mus musculus (Mouse).